The chain runs to 289 residues: Ribosomal protein L11 methyltransferase (289 aa).

S-adenosyl-L-methionine is bound by residues Thr-134, Gly-155, Asp-177, and Asn-225.

It belongs to the methyltransferase superfamily. PrmA family.

It localises to the cytoplasm. The catalysed reaction is L-lysyl-[protein] + 3 S-adenosyl-L-methionine = N(6),N(6),N(6)-trimethyl-L-lysyl-[protein] + 3 S-adenosyl-L-homocysteine + 3 H(+). Its function is as follows. Methylates ribosomal protein L11. The chain is Ribosomal protein L11 methyltransferase from Parasynechococcus marenigrum (strain WH8102).